Here is a 239-residue protein sequence, read N- to C-terminus: MKIDILTLFPDMFAPLEHSIVGKAKDKGILEINYHNFRDNAEKARHVDDEPYGGGQGMLLRAQPIFDTFDKLNVTKPRVILLDPAGRTFNQAYAEELAQEEELVFICGHYEGYDERIKTLVTDEISLGDFVLTGGELAAMTIVDATVRLIPEVLGKEASHKDDSFSSGLLEFPQYTRPAEFRGMKVPDVLLSGHHVNIRRWRMEQSLRKTWERRPDLLENYDFTDEERQILEEIKSEGK.

S-adenosyl-L-methionine-binding positions include Gly-108 and 127 to 132 (LGDFVL).

It belongs to the RNA methyltransferase TrmD family. In terms of assembly, homodimer.

The protein resides in the cytoplasm. It catalyses the reaction guanosine(37) in tRNA + S-adenosyl-L-methionine = N(1)-methylguanosine(37) in tRNA + S-adenosyl-L-homocysteine + H(+). Functionally, specifically methylates guanosine-37 in various tRNAs. The protein is tRNA (guanine-N(1)-)-methyltransferase of Streptococcus thermophilus (strain ATCC BAA-250 / LMG 18311).